The following is a 255-amino-acid chain: 5'-nucleotidase SurE (255 aa).

Positions 8, 9, 39, and 91 each coordinate a divalent metal cation.

Belongs to the SurE nucleotidase family. Requires a divalent metal cation as cofactor.

It localises to the cytoplasm. It catalyses the reaction a ribonucleoside 5'-phosphate + H2O = a ribonucleoside + phosphate. Nucleotidase that shows phosphatase activity on nucleoside 5'-monophosphates. The protein is 5'-nucleotidase SurE of Acinetobacter baumannii (strain AB0057).